The sequence spans 274 residues: Large ribosomal subunit protein uL2 (274 aa).

The interval 224–254 (AMNPVDHPHGGGEGRTGEGQAPVSPWNTLTK) is disordered. A compositionally biased stretch (basic and acidic residues) spans 229–239 (DHPHGGGEGRT).

It belongs to the universal ribosomal protein uL2 family. In terms of assembly, part of the 50S ribosomal subunit. Forms a bridge to the 30S subunit in the 70S ribosome.

One of the primary rRNA binding proteins. Required for association of the 30S and 50S subunits to form the 70S ribosome, for tRNA binding and peptide bond formation. It has been suggested to have peptidyltransferase activity; this is somewhat controversial. Makes several contacts with the 16S rRNA in the 70S ribosome. In Leptothrix cholodnii (strain ATCC 51168 / LMG 8142 / SP-6) (Leptothrix discophora (strain SP-6)), this protein is Large ribosomal subunit protein uL2.